A 251-amino-acid polypeptide reads, in one-letter code: Imidazole glycerol phosphate synthase subunit HisF (251 aa).

Catalysis depends on residues aspartate 11 and aspartate 130.

Belongs to the HisA/HisF family. As to quaternary structure, heterodimer of HisH and HisF.

The protein localises to the cytoplasm. The enzyme catalyses 5-[(5-phospho-1-deoxy-D-ribulos-1-ylimino)methylamino]-1-(5-phospho-beta-D-ribosyl)imidazole-4-carboxamide + L-glutamine = D-erythro-1-(imidazol-4-yl)glycerol 3-phosphate + 5-amino-1-(5-phospho-beta-D-ribosyl)imidazole-4-carboxamide + L-glutamate + H(+). It participates in amino-acid biosynthesis; L-histidine biosynthesis; L-histidine from 5-phospho-alpha-D-ribose 1-diphosphate: step 5/9. IGPS catalyzes the conversion of PRFAR and glutamine to IGP, AICAR and glutamate. The HisF subunit catalyzes the cyclization activity that produces IGP and AICAR from PRFAR using the ammonia provided by the HisH subunit. This Streptococcus mutans serotype c (strain ATCC 700610 / UA159) protein is Imidazole glycerol phosphate synthase subunit HisF.